The sequence spans 248 residues: UPF0246 protein RPR_00055 (248 aa).

This sequence belongs to the UPF0246 family.

The polypeptide is UPF0246 protein RPR_00055 (Rickettsia peacockii (strain Rustic)).